The following is a 239-amino-acid chain: MTIYLPELIPSHSTVFPDIENALNNPDGLLIMGGDLSSKQLISAYQHGIFPWYSNGDPILWWSPSVRGVFFPEQFSPSKSLKKFFRKSNYNVTLNKATYQVIDLCASTRPKEETWIMPEMINAYKKLANLGYCHSVEVWNEDELIGGLYGLQIGQIFCGESMFSLQTNASKIALWKFCEHFVSFNGKLIDCQMMNPHLESLGAKEMKRCDFKTLLEELSTKSTIANCYLPQILGDNSLS.

Belongs to the L/F-transferase family.

The protein resides in the cytoplasm. The catalysed reaction is N-terminal L-lysyl-[protein] + L-leucyl-tRNA(Leu) = N-terminal L-leucyl-L-lysyl-[protein] + tRNA(Leu) + H(+). The enzyme catalyses N-terminal L-arginyl-[protein] + L-leucyl-tRNA(Leu) = N-terminal L-leucyl-L-arginyl-[protein] + tRNA(Leu) + H(+). It catalyses the reaction L-phenylalanyl-tRNA(Phe) + an N-terminal L-alpha-aminoacyl-[protein] = an N-terminal L-phenylalanyl-L-alpha-aminoacyl-[protein] + tRNA(Phe). Its function is as follows. Functions in the N-end rule pathway of protein degradation where it conjugates Leu, Phe and, less efficiently, Met from aminoacyl-tRNAs to the N-termini of proteins containing an N-terminal arginine or lysine. This is Leucyl/phenylalanyl-tRNA--protein transferase from Aliivibrio fischeri (strain ATCC 700601 / ES114) (Vibrio fischeri).